The following is a 414-amino-acid chain: Serine hydroxymethyltransferase (414 aa).

Residues L117 and G121–L123 contribute to the (6S)-5,6,7,8-tetrahydrofolate site. K226 carries the N6-(pyridoxal phosphate)lysine modification. (6S)-5,6,7,8-tetrahydrofolate is bound by residues E241 and T349 to F351.

Belongs to the SHMT family. In terms of assembly, homodimer. Pyridoxal 5'-phosphate is required as a cofactor.

It is found in the cytoplasm. It catalyses the reaction (6R)-5,10-methylene-5,6,7,8-tetrahydrofolate + glycine + H2O = (6S)-5,6,7,8-tetrahydrofolate + L-serine. It functions in the pathway one-carbon metabolism; tetrahydrofolate interconversion. It participates in amino-acid biosynthesis; glycine biosynthesis; glycine from L-serine: step 1/1. Its function is as follows. Catalyzes the reversible interconversion of serine and glycine with tetrahydrofolate (THF) serving as the one-carbon carrier. Also exhibits THF-independent aldolase activity toward beta-hydroxyamino acids, producing glycine and aldehydes, via a retro-aldol mechanism. The sequence is that of Serine hydroxymethyltransferase from Methanothrix thermoacetophila (strain DSM 6194 / JCM 14653 / NBRC 101360 / PT) (Methanosaeta thermophila).